The chain runs to 100 residues: Aspartyl/glutamyl-tRNA(Asn/Gln) amidotransferase subunit C (100 aa).

The protein belongs to the GatC family. Heterotrimer of A, B and C subunits.

The catalysed reaction is L-glutamyl-tRNA(Gln) + L-glutamine + ATP + H2O = L-glutaminyl-tRNA(Gln) + L-glutamate + ADP + phosphate + H(+). It carries out the reaction L-aspartyl-tRNA(Asn) + L-glutamine + ATP + H2O = L-asparaginyl-tRNA(Asn) + L-glutamate + ADP + phosphate + 2 H(+). In terms of biological role, allows the formation of correctly charged Asn-tRNA(Asn) or Gln-tRNA(Gln) through the transamidation of misacylated Asp-tRNA(Asn) or Glu-tRNA(Gln) in organisms which lack either or both of asparaginyl-tRNA or glutaminyl-tRNA synthetases. The reaction takes place in the presence of glutamine and ATP through an activated phospho-Asp-tRNA(Asn) or phospho-Glu-tRNA(Gln). The protein is Aspartyl/glutamyl-tRNA(Asn/Gln) amidotransferase subunit C of Staphylococcus haemolyticus (strain JCSC1435).